The following is a 357-amino-acid chain: S-adenosylmethionine decarboxylase proenzyme (357 aa).

Catalysis depends on residues E11 and E14. S71 functions as the Schiff-base intermediate with substrate; via pyruvic acid in the catalytic mechanism. S71 is modified (pyruvic acid (Ser); by autocatalysis). C85 (proton donor; for catalytic activity) is an active-site residue. Active-site proton acceptor; for processing activity residues include S234 and H247.

The protein belongs to the eukaryotic AdoMetDC family. Requires pyruvate as cofactor. Is synthesized initially as an inactive proenzyme. Formation of the active enzyme involves a self-maturation process in which the active site pyruvoyl group is generated from an internal serine residue via an autocatalytic post-translational modification. Two non-identical subunits are generated from the proenzyme in this reaction, and the pyruvate is formed at the N-terminus of the alpha chain, which is derived from the carboxyl end of the proenzyme. The post-translation cleavage follows an unusual pathway, termed non-hydrolytic serinolysis, in which the side chain hydroxyl group of the serine supplies its oxygen atom to form the C-terminus of the beta chain, while the remainder of the serine residue undergoes an oxidative deamination to produce ammonia and the pyruvoyl group blocking the N-terminus of the alpha chain.

The enzyme catalyses S-adenosyl-L-methionine + H(+) = S-adenosyl 3-(methylsulfanyl)propylamine + CO2. It functions in the pathway amine and polyamine biosynthesis; S-adenosylmethioninamine biosynthesis; S-adenosylmethioninamine from S-adenosyl-L-methionine: step 1/1. In Catharanthus roseus (Madagascar periwinkle), this protein is S-adenosylmethionine decarboxylase proenzyme (SAMDC).